The primary structure comprises 505 residues: 2,3-bisphosphoglycerate-independent phosphoglycerate mutase (505 aa).

Residues D13 and S63 each coordinate Mn(2+). Catalysis depends on S63, which acts as the Phosphoserine intermediate. Residues H124, 153–154 (RD), R183, R189, 254–257 (RADR), and K329 contribute to the substrate site. Residues D395, H399, D436, H437, and H455 each coordinate Mn(2+).

Belongs to the BPG-independent phosphoglycerate mutase family. As to quaternary structure, monomer. Mn(2+) serves as cofactor.

It catalyses the reaction (2R)-2-phosphoglycerate = (2R)-3-phosphoglycerate. Its pathway is carbohydrate degradation; glycolysis; pyruvate from D-glyceraldehyde 3-phosphate: step 3/5. Functionally, catalyzes the interconversion of 2-phosphoglycerate and 3-phosphoglycerate. This is 2,3-bisphosphoglycerate-independent phosphoglycerate mutase from Agrobacterium fabrum (strain C58 / ATCC 33970) (Agrobacterium tumefaciens (strain C58)).